The following is a 133-amino-acid chain: Small ribosomal subunit protein uS11 (133 aa).

Belongs to the universal ribosomal protein uS11 family. In terms of assembly, part of the 30S ribosomal subunit. Interacts with proteins S7 and S18. Binds to IF-3.

Its function is as follows. Located on the platform of the 30S subunit, it bridges several disparate RNA helices of the 16S rRNA. Forms part of the Shine-Dalgarno cleft in the 70S ribosome. This Bordetella petrii (strain ATCC BAA-461 / DSM 12804 / CCUG 43448) protein is Small ribosomal subunit protein uS11.